We begin with the raw amino-acid sequence, 385 residues long: S-adenosylmethionine synthase (385 aa).

An ATP-binding site is contributed by histidine 16. Aspartate 18 is a Mg(2+) binding site. Glutamate 44 serves as a coordination point for K(+). Residues glutamate 57 and glutamine 100 each contribute to the L-methionine site. The segment at glutamine 100–arginine 110 is flexible loop. ATP-binding positions include aspartate 164–lysine 166, lysine 230–phenylalanine 231, aspartate 239, arginine 245–lysine 246, alanine 262, and lysine 266. Aspartate 239 provides a ligand contact to L-methionine. Lysine 270 contributes to the L-methionine binding site.

The protein belongs to the AdoMet synthase family. Homotetramer; dimer of dimers. Mg(2+) serves as cofactor. The cofactor is K(+).

The protein localises to the cytoplasm. The catalysed reaction is L-methionine + ATP + H2O = S-adenosyl-L-methionine + phosphate + diphosphate. The protein operates within amino-acid biosynthesis; S-adenosyl-L-methionine biosynthesis; S-adenosyl-L-methionine from L-methionine: step 1/1. Its function is as follows. Catalyzes the formation of S-adenosylmethionine (AdoMet) from methionine and ATP. The overall synthetic reaction is composed of two sequential steps, AdoMet formation and the subsequent tripolyphosphate hydrolysis which occurs prior to release of AdoMet from the enzyme. This is S-adenosylmethionine synthase from Helicobacter pylori (strain Shi470).